The following is a 1001-amino-acid chain: O-GlcNAcase NagJ (1001 aa).

Positions 1 to 30 (MKRKMLKRLLTSAFACMFIANGLITTTVRA) are cleaved as a signal peptide. Residues 179–469 (VSARGIVEGF…WNRAIDMLYG (291 aa)) form a catalytic domain region. A GH84 domain is found at 180-452 (SARGIVEGFY…TAADYSWNMD (273 aa)). The a protein site is built by Gly187, Lys218, and Asp297. Asp298 serves as the catalytic Proton donor. A protein contacts are provided by residues Tyr335, 394-396 (WWN), Asp401, and Asn429. Coiled coils occupy residues 515 to 543 (KEDASALIEELYGEFARMEEACNNLKANL) and 573 to 597 (VAQLNEDTEAYESAKEIAQNKLNTA). In terms of domain architecture, Fibronectin type-III spans 916–1001 (PVRDFKASEI…KESLTLRTAR (86 aa)).

It belongs to the glycosyl hydrolase 84 family.

The catalysed reaction is 3-O-(N-acetyl-beta-D-glucosaminyl)-L-seryl-[protein] + H2O = N-acetyl-D-glucosamine + L-seryl-[protein]. It carries out the reaction 3-O-(N-acetyl-beta-D-glucosaminyl)-L-threonyl-[protein] + H2O = L-threonyl-[protein] + N-acetyl-D-glucosamine. Inhibited by O-(2-acetamido-2-deoxy-D-glucopyranosylidene)amino-N-phenyl-carbamate (PUGNAc) and streptozotocin. Binds carbohydrates. Capable of hydrolyzing the glycosidic link of O-GlcNAcylated proteins. Can bind and deglycosylate O-glycosylated peptides from mammals. The chain is O-GlcNAcase NagJ (nagJ) from Clostridium perfringens (strain ATCC 13124 / DSM 756 / JCM 1290 / NCIMB 6125 / NCTC 8237 / Type A).